The chain runs to 354 residues: Methionine import ATP-binding protein MetN (354 aa).

The 243-residue stretch at leucine 8–isoleucine 250 folds into the ABC transporter domain. Glycine 42–serine 49 lines the ATP pocket.

The protein belongs to the ABC transporter superfamily. Methionine importer (TC 3.A.1.24) family. The complex is composed of two ATP-binding proteins (MetN), two transmembrane proteins (MetI) and a solute-binding protein (MetQ).

The protein localises to the cell membrane. It carries out the reaction L-methionine(out) + ATP + H2O = L-methionine(in) + ADP + phosphate + H(+). The enzyme catalyses D-methionine(out) + ATP + H2O = D-methionine(in) + ADP + phosphate + H(+). Part of the ABC transporter complex MetNIQ involved in methionine import. Responsible for energy coupling to the transport system. The polypeptide is Methionine import ATP-binding protein MetN (Streptococcus pyogenes serotype M6 (strain ATCC BAA-946 / MGAS10394)).